The primary structure comprises 542 residues: CTP synthase (542 aa).

The interval 1–265 (MARYVFITGG…DSEVLAAFGI (265 aa)) is amidoligase domain. Serine 13 provides a ligand contact to CTP. A UTP-binding site is contributed by serine 13. Position 14-19 (14-19 (SLGKGI)) interacts with ATP. Tyrosine 54 serves as a coordination point for L-glutamine. Aspartate 71 serves as a coordination point for ATP. Mg(2+) is bound by residues aspartate 71 and glutamate 139. CTP is bound by residues 146 to 148 (DIE), 186 to 191 (KTKPTQ), and lysine 222. UTP-binding positions include 186–191 (KTKPTQ) and lysine 222. A Glutamine amidotransferase type-1 domain is found at 291-541 (TIAIVGKYTG…IAAAVEQSRL (251 aa)). Glycine 353 contributes to the L-glutamine binding site. Catalysis depends on cysteine 380, which acts as the Nucleophile; for glutamine hydrolysis. L-glutamine-binding positions include 381 to 384 (FGMQ), glutamate 404, and arginine 469. Active-site residues include histidine 514 and glutamate 516.

It belongs to the CTP synthase family. In terms of assembly, homotetramer.

It catalyses the reaction UTP + L-glutamine + ATP + H2O = CTP + L-glutamate + ADP + phosphate + 2 H(+). The enzyme catalyses L-glutamine + H2O = L-glutamate + NH4(+). It carries out the reaction UTP + NH4(+) + ATP = CTP + ADP + phosphate + 2 H(+). It functions in the pathway pyrimidine metabolism; CTP biosynthesis via de novo pathway; CTP from UDP: step 2/2. Its activity is regulated as follows. Allosterically activated by GTP, when glutamine is the substrate; GTP has no effect on the reaction when ammonia is the substrate. The allosteric effector GTP functions by stabilizing the protein conformation that binds the tetrahedral intermediate(s) formed during glutamine hydrolysis. Inhibited by the product CTP, via allosteric rather than competitive inhibition. Catalyzes the ATP-dependent amination of UTP to CTP with either L-glutamine or ammonia as the source of nitrogen. Regulates intracellular CTP levels through interactions with the four ribonucleotide triphosphates. The polypeptide is CTP synthase (Chelativorans sp. (strain BNC1)).